The chain runs to 345 residues: Dihydroorotase (345 aa).

Positions 13 and 15 each coordinate Zn(2+). Residues 15–17 (HLR) and N41 each bind substrate. Zn(2+)-binding residues include K99, H136, and H174. N6-carboxylysine is present on K99. H136 is a substrate binding site. A substrate-binding site is contributed by L219. D247 contributes to the Zn(2+) binding site. Residue D247 is part of the active site. H251 and A263 together coordinate substrate.

Belongs to the metallo-dependent hydrolases superfamily. DHOase family. Class II DHOase subfamily. As to quaternary structure, homodimer. Zn(2+) is required as a cofactor.

It carries out the reaction (S)-dihydroorotate + H2O = N-carbamoyl-L-aspartate + H(+). It participates in pyrimidine metabolism; UMP biosynthesis via de novo pathway; (S)-dihydroorotate from bicarbonate: step 3/3. In terms of biological role, catalyzes the reversible cyclization of carbamoyl aspartate to dihydroorotate. The chain is Dihydroorotase from Acaryochloris marina (strain MBIC 11017).